We begin with the raw amino-acid sequence, 586 residues long: uncharacterized protein (586 aa).

2 coiled-coil regions span residues 183 to 293 (THTE…ELEN) and 331 to 400 (FKDK…DKKN).

This is an uncharacterized protein from Bacillus subtilis (strain 168).